We begin with the raw amino-acid sequence, 436 residues long: Voltage-gated potassium channel regulatory subunit KCNG3 (436 aa).

At 1 to 168 (MTFGRSGAAS…RTFEEPTSSL (168 aa)) the chain is on the cytoplasmic side. The chain crosses the membrane as a helical span at residues 169–190 (AAQILASVSVVFVIVSMVVLCA). The Extracellular portion of the chain corresponds to 191 to 220 (STLPDWRNAAADNRSLDDRSRYSAGPGREP). A helical membrane pass occupies residues 221-242 (SGIIEAICIGWFTAECIVRFIV). Over 243-253 (SKNKCEFVKRP) the chain is Cytoplasmic. The chain crosses the membrane as a helical span at residues 254 to 274 (LNIIDLLAITPYYISVLMTVF). The Extracellular portion of the chain corresponds to 275 to 284 (TGENSQLQRA). A helical; Voltage-sensor transmembrane segment spans residues 285–305 (GVTLRVLRMMRIFWVIKLARH). The Cytoplasmic portion of the chain corresponds to 306-320 (FIGLQTLGLTLKRCY). Residues 321 to 342 (REMVMLLVFICVAMAIFSALSQ) traverse the membrane as a helical segment. Over 343-360 (LLEHGLDLETSNKDFTSI) the chain is Extracellular. An intramembrane region (helical) is located at residues 361–372 (PAACWWVIISMT). The Selectivity filter motif lies at 373–378 (TVGYGD). Residues 373 to 380 (TVGYGDMY) lie within the membrane without spanning it. Topologically, residues 381-387 (PITVPGR) are extracellular. Residues 388 to 416 (ILGGVCVVSGIVLLALPITFIYHSFVQCY) traverse the membrane as a helical segment. At 417-436 (HELKFRSARYSRSLSTEFLN) the chain is on the cytoplasmic side.

Belongs to the potassium channel family. G (TC 1.A.1.2) subfamily. Kv6.3/KCNG3 sub-subfamily. In terms of assembly, heterotetramer with KCNB1. Does not form homomultimers. In terms of tissue distribution, expressed in the brain, liver, testis, small intestine, colon, thymus and adrenal gland.

The protein resides in the cell membrane. The protein localises to the cytoplasm. Functionally, regulatory subunit of the voltage-gated potassium (Kv) channel which, when coassembled with KCNB1, modulates the kinetics parameters of the heterotetrameric channel namely the inactivation and deactivation rate. Potassium channel subunit that does not form functional channels by itself. Reduces the deactivation rate. Moderately accelerates activation. The chain is Voltage-gated potassium channel regulatory subunit KCNG3 from Homo sapiens (Human).